Reading from the N-terminus, the 140-residue chain is 3-hydroxyacyl-[acyl-carrier-protein] dehydratase FabZ (140 aa).

The active site involves His47.

It belongs to the thioester dehydratase family. FabZ subfamily.

Its subcellular location is the cytoplasm. It carries out the reaction a (3R)-hydroxyacyl-[ACP] = a (2E)-enoyl-[ACP] + H2O. Its function is as follows. Involved in unsaturated fatty acids biosynthesis. Catalyzes the dehydration of short chain beta-hydroxyacyl-ACPs and long chain saturated and unsaturated beta-hydroxyacyl-ACPs. This Streptococcus pneumoniae (strain 70585) protein is 3-hydroxyacyl-[acyl-carrier-protein] dehydratase FabZ.